The primary structure comprises 908 residues: MFGKLLTKVFGSRNDRTLKGLQKVVNKINALEADYEKLTDEQLKAKTAEFRERLAAGASLESIMAEAFATVREASKRVFEMRHFDVQLLGGMVLDSNRIAEMRTGEGKTLTATLPAYLNALTGKGVHVITVNDYLARRDAENNRPLFEFLGLTVGINVAGLGQQAKKDAYNADITYGTNNEFGFDYLRDNMAFSPQERVQRPLHYALIDEVDSILIDEARTPLIISGAAEDSSELYIKINTLIPSLIRQDKEDSEEYVGEGDYSIDEKAKQVHFTERGQEKVENLLIERGMLAEGDSLYSAANISLLHHVNAALRAHTLFERDVDYIVQDGEVIIVDEHTGRTMPGRRWSEGLHQAVEAKEGVRIQNENQTLASITFQNYFRLYEKLAGMTGTADTEAFEFQHIYGLDTVVVPTNRPMVRKDMADLVYLTANEKYQAIIKDIKDCRERGQPVLVGTVSIEQSELLARLMVKEKIPHQVLNAKFHEKEAEIVAQAGRTGAVTIATNMAGRGTDIVLGGNWNMEIEALENPTAEQKAKIKADWQERHDAVVAAGGLHILGTERHESRRIDNQLRGRAGRQGDAGSSRFYLSMEDSLMRIFASDRVSGMMKKLGMEEGEAIEHPWVSRAIENAQRKVEARNFDIRKQLLEFDDVANDQRQVVYAQRNELMDAESIEDTIKNIQDDVISAVIDQYIPPQSVEELWDVPGLEQRLQQEFMLKLPIQEWLDKEDDLHEETLRERIITSWSDAYKAKEEMVGAPVLRQFEKAVMLQTLDGLWKEHLAAMDHLRQGIHLRGYAQKNPKQEYKRESFELFQQLLSTLKHDVISVLSKVQVQAQSDVEEMEARRREEDAKIQRDYQHAAAEALVGGDDGSDEMMAHTPMIRDGDKVGRNDPCPCGSGRKYKQCHGKLS.

ATP is bound by residues Gln87, 105–109, and Asp512; that span reads GEGKT. The disordered stretch occupies residues 865–908; it reads GGDDGSDEMMAHTPMIRDGDKVGRNDPCPCGSGRKYKQCHGKLS. A compositionally biased stretch (basic and acidic residues) spans 879-888; the sequence is MIRDGDKVGR. Residues Cys892, Cys894, Cys903, and His904 each contribute to the Zn(2+) site. Residues 898-908 are compositionally biased toward basic residues; sequence RKYKQCHGKLS.

The protein belongs to the SecA family. In terms of assembly, monomer and homodimer. Part of the essential Sec protein translocation apparatus which comprises SecA, SecYEG and auxiliary proteins SecDF-YajC and YidC. It depends on Zn(2+) as a cofactor.

The protein localises to the cell inner membrane. It localises to the cytoplasm. It catalyses the reaction ATP + H2O + cellular proteinSide 1 = ADP + phosphate + cellular proteinSide 2.. Its function is as follows. Part of the Sec protein translocase complex. Interacts with the SecYEG preprotein conducting channel. Has a central role in coupling the hydrolysis of ATP to the transfer of proteins into and across the cell membrane, serving both as a receptor for the preprotein-SecB complex and as an ATP-driven molecular motor driving the stepwise translocation of polypeptide chains across the membrane. This chain is Protein translocase subunit SecA, found in Shewanella sp. (strain ANA-3).